The following is a 257-amino-acid chain: Snake venom serine protease 2C (257 aa).

A signal peptide spans 1–18 (MVLIRVLANLLILQLSYA). Residues 19-24 (QKSSEL) constitute a propeptide that is removed on maturation. A Peptidase S1 domain is found at 25 to 248 (VIGGHPCNIN…HLDWIKSIIA (224 aa)). 6 disulfide bridges follow: Cys-31/Cys-162, Cys-49/Cys-65, Cys-97/Cys-255, Cys-141/Cys-209, Cys-173/Cys-188, and Cys-199/Cys-224. Catalysis depends on charge relay system residues His-64 and Asp-109. N-linked (GlcNAc...) asparagine glycosylation is found at Asn-116, Asn-120, and Asn-121. Ser-203 serves as the catalytic Charge relay system.

Belongs to the peptidase S1 family. Snake venom subfamily. In terms of assembly, monomer. Expressed by the venom gland.

The protein localises to the secreted. Its function is as follows. Snake venom serine protease that may act in the hemostasis system of the prey. The polypeptide is Snake venom serine protease 2C (TLG2C) (Craspedocephalus gramineus (Bamboo pit viper)).